A 290-amino-acid chain; its full sequence is 4-hydroxybenzoate octaprenyltransferase (290 aa).

8 consecutive transmembrane segments (helical) span residues 23 to 43, 46 to 66, 99 to 119, 141 to 161, 163 to 183, 212 to 232, 233 to 253, and 268 to 288; these read IGAL…TPGM, LWIL…GCVV, LFVV…AMTI, LPQV…FAAV, ESLP…AVAY, TLII…IGWL, NGLG…FVYQ, and AFMN…MSYW.

The protein belongs to the UbiA prenyltransferase family. Mg(2+) is required as a cofactor.

Its subcellular location is the cell inner membrane. It catalyses the reaction all-trans-octaprenyl diphosphate + 4-hydroxybenzoate = 4-hydroxy-3-(all-trans-octaprenyl)benzoate + diphosphate. The protein operates within cofactor biosynthesis; ubiquinone biosynthesis. Its function is as follows. Catalyzes the prenylation of para-hydroxybenzoate (PHB) with an all-trans polyprenyl group. Mediates the second step in the final reaction sequence of ubiquinone-8 (UQ-8) biosynthesis, which is the condensation of the polyisoprenoid side chain with PHB, generating the first membrane-bound Q intermediate 3-octaprenyl-4-hydroxybenzoate. The polypeptide is 4-hydroxybenzoate octaprenyltransferase (Salmonella paratyphi C (strain RKS4594)).